Reading from the N-terminus, the 370-residue chain is tRNA (guanine(26)-N(2))-dimethyltransferase (370 aa).

In terms of domain architecture, Trm1 methyltransferase spans 4 to 368 (TWVTEGRTTI…APLEEIRDCI (365 aa)). Positions 41, 66, 82, 108, and 109 each coordinate S-adenosyl-L-methionine. Cys237, Cys240, Cys256, and Cys259 together coordinate Zn(2+).

The protein belongs to the class I-like SAM-binding methyltransferase superfamily. Trm1 family.

The enzyme catalyses guanosine(26) in tRNA + 2 S-adenosyl-L-methionine = N(2)-dimethylguanosine(26) in tRNA + 2 S-adenosyl-L-homocysteine + 2 H(+). Dimethylates a single guanine residue at position 26 of a number of tRNAs using S-adenosyl-L-methionine as donor of the methyl groups. The protein is tRNA (guanine(26)-N(2))-dimethyltransferase of Methanospirillum hungatei JF-1 (strain ATCC 27890 / DSM 864 / NBRC 100397 / JF-1).